Reading from the N-terminus, the 455-residue chain is Bifunctional protein GlmU (455 aa).

A pyrophosphorylase region spans residues 1-226 (MIAVAILAAG…YQEILGINDR (226 aa)). UDP-N-acetyl-alpha-D-glucosamine-binding positions include 7–10 (LAAG), Lys21, Gln73, and 78–79 (GT). Mg(2+) is bound at residue Asp103. UDP-N-acetyl-alpha-D-glucosamine is bound by residues Gly140, Glu155, Asn170, and Asn224. Residue Asn224 coordinates Mg(2+). The tract at residues 227 to 247 (KQLATAYKILQDRIKDDWLVA) is linker. Positions 248–455 (GVTIMDPDSI…RPISSKQTEK (208 aa)) are N-acetyltransferase. 2 residues coordinate UDP-N-acetyl-alpha-D-glucosamine: Arg329 and Lys347. Residue His359 is the Proton acceptor of the active site. UDP-N-acetyl-alpha-D-glucosamine contacts are provided by Tyr362 and Asn373. Residues Ala376, 382-383 (NY), Ala419, and Arg436 each bind acetyl-CoA.

This sequence in the N-terminal section; belongs to the N-acetylglucosamine-1-phosphate uridyltransferase family. In the C-terminal section; belongs to the transferase hexapeptide repeat family. In terms of assembly, homotrimer. Mg(2+) serves as cofactor.

The protein resides in the cytoplasm. The enzyme catalyses alpha-D-glucosamine 1-phosphate + acetyl-CoA = N-acetyl-alpha-D-glucosamine 1-phosphate + CoA + H(+). It carries out the reaction N-acetyl-alpha-D-glucosamine 1-phosphate + UTP + H(+) = UDP-N-acetyl-alpha-D-glucosamine + diphosphate. It functions in the pathway nucleotide-sugar biosynthesis; UDP-N-acetyl-alpha-D-glucosamine biosynthesis; N-acetyl-alpha-D-glucosamine 1-phosphate from alpha-D-glucosamine 6-phosphate (route II): step 2/2. Its pathway is nucleotide-sugar biosynthesis; UDP-N-acetyl-alpha-D-glucosamine biosynthesis; UDP-N-acetyl-alpha-D-glucosamine from N-acetyl-alpha-D-glucosamine 1-phosphate: step 1/1. It participates in bacterial outer membrane biogenesis; LPS lipid A biosynthesis. In terms of biological role, catalyzes the last two sequential reactions in the de novo biosynthetic pathway for UDP-N-acetylglucosamine (UDP-GlcNAc). The C-terminal domain catalyzes the transfer of acetyl group from acetyl coenzyme A to glucosamine-1-phosphate (GlcN-1-P) to produce N-acetylglucosamine-1-phosphate (GlcNAc-1-P), which is converted into UDP-GlcNAc by the transfer of uridine 5-monophosphate (from uridine 5-triphosphate), a reaction catalyzed by the N-terminal domain. This is Bifunctional protein GlmU from Acaryochloris marina (strain MBIC 11017).